The chain runs to 371 residues: D-erythrose-4-phosphate dehydrogenase (371 aa).

NAD(+) is bound at residue 12-13 (RI). Substrate is bound by residues 154–156 (SCT), arginine 200, 213–214 (TK), and arginine 236. Catalysis depends on cysteine 155, which acts as the Nucleophile. Asparagine 318 is an NAD(+) binding site.

This sequence belongs to the glyceraldehyde-3-phosphate dehydrogenase family. Epd subfamily. Homotetramer.

It localises to the cytoplasm. The catalysed reaction is D-erythrose 4-phosphate + NAD(+) + H2O = 4-phospho-D-erythronate + NADH + 2 H(+). Its pathway is cofactor biosynthesis; pyridoxine 5'-phosphate biosynthesis; pyridoxine 5'-phosphate from D-erythrose 4-phosphate: step 1/5. Its function is as follows. Catalyzes the NAD-dependent conversion of D-erythrose 4-phosphate to 4-phosphoerythronate. This is D-erythrose-4-phosphate dehydrogenase from Psychromonas ingrahamii (strain DSM 17664 / CCUG 51855 / 37).